Consider the following 253-residue polypeptide: MFTVIIPGRYASTRLPGKPLADIHGKPMIVRVMEQAKRSGAKRVIVATDNLDVVRAVEQAGGEACMTREDHHSGTERLAEVIEKYQFADDEIIVNVQGDEPLIPPAIITQVAENLANCGAGMATLAVPIVDSKEAFNPNAVKVVMDAKGFALYFSRATIPWERDRFNLSHDEIGEHYLRHIGIYAYRAGFIRRYITWEPSPLESIEMLEQLRVLWYGEKIHVAKALEVPGVGVDTQDDLIAARAAFRALNQEF.

Belongs to the KdsB family.

Its subcellular location is the cytoplasm. It catalyses the reaction 3-deoxy-alpha-D-manno-oct-2-ulosonate + CTP = CMP-3-deoxy-beta-D-manno-octulosonate + diphosphate. It participates in nucleotide-sugar biosynthesis; CMP-3-deoxy-D-manno-octulosonate biosynthesis; CMP-3-deoxy-D-manno-octulosonate from 3-deoxy-D-manno-octulosonate and CTP: step 1/1. It functions in the pathway bacterial outer membrane biogenesis; lipopolysaccharide biosynthesis. Activates KDO (a required 8-carbon sugar) for incorporation into bacterial lipopolysaccharide in Gram-negative bacteria. The chain is 3-deoxy-manno-octulosonate cytidylyltransferase from Proteus mirabilis (strain HI4320).